We begin with the raw amino-acid sequence, 842 residues long: MDIRKAYLDFFASKGHEITPSSPLVPDDATLLFANAGMVPFKSIFTGEIPRPNPPRKTSCQTCIRAGGKHNDLDNVGYTARHHTFFEMLGNFSFGDYFKEQAIAYAWEFVTEVLKLPKDRLYVTVHENDDEAFNLWQKHIQKERIYKFGDKDNFWQMGDTGPCGPCSEIFYDQGEEHFNSSEDYMGGDGDRFLEIWNLVFMQYERSADGVLSPLPKPSIDTGMGLERVTAIKEGKFSNFDSSLFMPIINEISKLCNKTYIYESGASFRVIADHIRSSVFLLAQGVSFDKEGRGYVLRRILRRALRHGYLLGFKQAFMYKLVDIVCDLMGGHYTYLNEKKDFIKEQIRLEEERFLSTIENGIEIFNEELKNTKEIFSGEVAFKLYDTYGFPLDLTADMLREKNLKVDEEKFELLMNEQKARAKASWKGSGDKTASGDFKNLLEKFGENHFVGYEKAECESKILALLDEDFKEVSTLKDAGWVMLENTPFYATSGGQSADSGFIAKREVLDTQKFFNLNLSFVKAGEELKVGDIVHARIDTEKREQIARHHSATHLLHHALREILGSHVSQAGSLVESNKLRFDFTHHKALNKEELESIEKRVNEMIINSSEAILENMPLEEAKKSGAIALFNEKYQGNVRVLTLGESKELCGGTHVKNTAQIGSFYIVKESGVSAGVRRIEAVVSKAALEFVKNQLEELSKVKDELKNNDILNGVKKLKNEILSLKNELKNSSKTELDSKNIQGVEICVKRIDNGDIKAMIDDFKNKFAKAVILLIQVKDEKITLAAGVKDAPLKAGALVKEAAQILGGNGGGRDDFATAGGKDLSKINEALKQSLETIEKAL.

Zn(2+) contacts are provided by His-549, His-553, Cys-650, and His-654.

The protein belongs to the class-II aminoacyl-tRNA synthetase family. Zn(2+) serves as cofactor.

It is found in the cytoplasm. The enzyme catalyses tRNA(Ala) + L-alanine + ATP = L-alanyl-tRNA(Ala) + AMP + diphosphate. Catalyzes the attachment of alanine to tRNA(Ala) in a two-step reaction: alanine is first activated by ATP to form Ala-AMP and then transferred to the acceptor end of tRNA(Ala). Also edits incorrectly charged Ser-tRNA(Ala) and Gly-tRNA(Ala) via its editing domain. The chain is Alanine--tRNA ligase from Campylobacter jejuni subsp. jejuni serotype O:23/36 (strain 81-176).